Reading from the N-terminus, the 385-residue chain is Cellulase CelDZ1 (385 aa).

Residues 6 to 26 traverse the membrane as a helical segment; it reads INKWYFFVGMLVIFAVIISLI. Substrate-binding positions include His87, 91-92, Tyr118, and His153; that span reads WF. Glu192 (proton donor) is an active-site residue. A substrate-binding site is contributed by Tyr261. The Nucleophile role is filled by Glu294. Substrate is bound by residues 300–301, Trp328, and 333–335; these read AS and KNE.

The protein belongs to the glycosyl hydrolase 5 (cellulase A) family. In terms of assembly, monomer.

It is found in the cell membrane. It catalyses the reaction Endohydrolysis of (1-&gt;4)-beta-D-glucosidic linkages in cellulose, lichenin and cereal beta-D-glucans.. With respect to regulation, activity is enhanced by 1mM Mn(2+), but is not affected by 1mM Ca(2+), Mg(2+), Zn(2+), K(+), Na(+) or Li(+). Activity is not inhibited by EDTA (in vitro). Thermostable endoglucanase that has high activity with soluble polymeric substrates containing beta-1,4-glycosidic bonds, such as carboxymethyl cellulose (CMC) and barley beta-D-glucan (in vitro). Has no activity with cellobiose and filter paper. Has no activity with substrates containing beta-1,3-linked glycans, such as laminarin. Likewise, lacks activity with xylan, galactomannan and pectin. The sequence is that of Cellulase CelDZ1 from Thermoanaerobacterium sp.